Consider the following 267-residue polypeptide: 5'-nucleotidase SurE (267 aa).

A divalent metal cation is bound by residues aspartate 9, aspartate 10, serine 41, and asparagine 95.

Belongs to the SurE nucleotidase family. Requires a divalent metal cation as cofactor.

The protein resides in the cytoplasm. It carries out the reaction a ribonucleoside 5'-phosphate + H2O = a ribonucleoside + phosphate. In terms of biological role, nucleotidase that shows phosphatase activity on nucleoside 5'-monophosphates. This chain is 5'-nucleotidase SurE, found in Aeropyrum pernix (strain ATCC 700893 / DSM 11879 / JCM 9820 / NBRC 100138 / K1).